Here is a 478-residue protein sequence, read N- to C-terminus: MLARHHDPIVAIATAPGRGAVGIVRVSGKDIAPVIAAICGRALAPRQATYLPFRDAQGQVIDQGLAIHFPAPHSYTGEDVLELQAHGGPVVLQLLLARCLEAGAALNPAIGQPWLAQLRVAQPGEFTERAFLNDKIDLAQAEAIADLIDASTETAARSAARSMSGEFSLAVNTLLEQLIHLRMLVEATLDFPEEDIDFLQKADAQGQLSRLQATLTGVMQRATQGAILREGIKVVIAGQPNAGKSSLLNALAGAELAIVTPIAGTTRDKVSELIQIEGVPLHVVDTAGLREALDEVEKIGVERAWAEIESADAVLFLHDLSRRDAALPAQDTINYIAADDRIARTLANKLPENTAIIDVWNKSDLTSPAGLQQVQGGVLISAKTGAGLQTLRQRLLQVVGWQAAPEGVFMARERHVRALHHVQDQLATAGRQLQAARPALDLLAEDLRQAQRQLSEITGEFTPDDLLGEIFSRFCIGK.

Arg-25, Glu-82, and Lys-135 together coordinate (6S)-5-formyl-5,6,7,8-tetrahydrofolate. Residues 231-400 enclose the TrmE-type G domain; sequence GIKVVIAGQP…LRQRLLQVVG (170 aa). Asn-241 contributes to the K(+) binding site. GTP is bound by residues 241–246, 260–266, and 285–288; these read NAGKSS, TPIAGTT, and DTAG. Position 245 (Ser-245) interacts with Mg(2+). K(+)-binding residues include Thr-260, Ile-262, and Thr-265. Thr-266 provides a ligand contact to Mg(2+). A (6S)-5-formyl-5,6,7,8-tetrahydrofolate-binding site is contributed by Lys-478.

This sequence belongs to the TRAFAC class TrmE-Era-EngA-EngB-Septin-like GTPase superfamily. TrmE GTPase family. Homodimer. Heterotetramer of two MnmE and two MnmG subunits. Requires K(+) as cofactor.

The protein resides in the cytoplasm. Its function is as follows. Exhibits a very high intrinsic GTPase hydrolysis rate. Involved in the addition of a carboxymethylaminomethyl (cmnm) group at the wobble position (U34) of certain tRNAs, forming tRNA-cmnm(5)s(2)U34. The polypeptide is tRNA modification GTPase MnmE (Polaromonas sp. (strain JS666 / ATCC BAA-500)).